Consider the following 215-residue polypeptide: Cytochrome b6 (215 aa).

A helical transmembrane segment spans residues 32-52 (IFYCLGGIVFVSFLIQVATGF). Cys-35 is a heme c binding site. Heme b contacts are provided by His-86 and His-100. 3 consecutive transmembrane segments (helical) span residues 90-110 (ASMMVLMMILHVFRVYLTGGF), 116-136 (LTWVTGVILGVLTVSFGVTGY), and 186-206 (LHTFVLPLLTAVFMLMHFLMI). Residues His-187 and His-202 each coordinate heme b.

Belongs to the cytochrome b family. PetB subfamily. In terms of assembly, the 4 large subunits of the cytochrome b6-f complex are cytochrome b6, subunit IV (17 kDa polypeptide, PetD), cytochrome f and the Rieske protein, while the 4 small subunits are PetG, PetL, PetM and PetN. The complex functions as a dimer. Requires heme b as cofactor. Heme c serves as cofactor.

The protein resides in the plastid. The protein localises to the chloroplast thylakoid membrane. Functionally, component of the cytochrome b6-f complex, which mediates electron transfer between photosystem II (PSII) and photosystem I (PSI), cyclic electron flow around PSI, and state transitions. The sequence is that of Cytochrome b6 from Porphyra purpurea (Red seaweed).